Reading from the N-terminus, the 296-residue chain is ATP synthase gamma chain (296 aa).

It belongs to the ATPase gamma chain family. As to quaternary structure, F-type ATPases have 2 components, CF(1) - the catalytic core - and CF(0) - the membrane proton channel. CF(1) has five subunits: alpha(3), beta(3), gamma(1), delta(1), epsilon(1). CF(0) has three main subunits: a, b and c.

The protein resides in the cell inner membrane. Produces ATP from ADP in the presence of a proton gradient across the membrane. The gamma chain is believed to be important in regulating ATPase activity and the flow of protons through the CF(0) complex. This chain is ATP synthase gamma chain, found in Rhodopirellula baltica (strain DSM 10527 / NCIMB 13988 / SH1).